Consider the following 331-residue polypeptide: FMRFamide-related neuropeptides (331 aa).

An N-terminal signal peptide occupies residues M1–A25. A propeptide spanning residues F26–S65 is cleaved from the precursor. Phenylalanine amide is present on residues F71 and F83. Residues N86–D94 constitute a propeptide that is removed on maturation. F100 is subject to Phenylalanine amide. The propeptide occupies A103–V168. The interval Q122–R158 is disordered. Residues P146–R158 show a composition bias toward basic and acidic residues. A phenylalanine amide mark is found at F174 and F181. Residues N184–E194 constitute a propeptide that is removed on maturation. F200 carries the phenylalanine amide modification. A propeptide spanning residues D203–E205 is cleaved from the precursor. F211 is modified (phenylalanine amide). The propeptide occupies S214 to D216. F222 carries the phenylalanine amide modification. Positions N225 to D236 are excised as a propeptide. Residue F242 is modified to Phenylalanine amide. Positions G245–E254 are excised as a propeptide. Residue F260 is modified to Phenylalanine amide. Positions D263–E265 are excised as a propeptide. Phenylalanine amide is present on F271. A propeptide spanning residues S274–D277 is cleaved from the precursor. Residues R279–F296 are compositionally biased toward basic and acidic residues. The segment at R279–T310 is disordered. Phenylalanine amide is present on F283. Residues N286–D293 constitute a propeptide that is removed on maturation. F299 is subject to Phenylalanine amide. Positions G302–D312 are excised as a propeptide. Phenylalanine amide is present on F318. Positions S321–G331 are excised as a propeptide.

It belongs to the FARP (FMRFamide related peptide) family.

It is found in the secreted. Its function is as follows. Excitatory neurotransmitters that directly modulate chromatophore function by activating chromatophore expansion at the chromatophore neuromuscular junction. In Doryteuthis opalescens (California market squid), this protein is FMRFamide-related neuropeptides.